The sequence spans 521 residues: GMP synthase [glutamine-hydrolyzing] (521 aa).

One can recognise a Glutamine amidotransferase type-1 domain in the interval 5–197 (KILILDFGSQ…VLDICGAQPS (193 aa)). Residue C81 is the Nucleophile of the active site. Active-site residues include H171 and E173. The GMPS ATP-PPase domain maps to 198–390 (WTMPNYIEEA…LGLPREMVYR (193 aa)). Residue 225–231 (SGGVDSS) participates in ATP binding.

Homodimer.

It carries out the reaction XMP + L-glutamine + ATP + H2O = GMP + L-glutamate + AMP + diphosphate + 2 H(+). It functions in the pathway purine metabolism; GMP biosynthesis; GMP from XMP (L-Gln route): step 1/1. Its function is as follows. Catalyzes the synthesis of GMP from XMP. The sequence is that of GMP synthase [glutamine-hydrolyzing] from Neisseria meningitidis serogroup C / serotype 2a (strain ATCC 700532 / DSM 15464 / FAM18).